We begin with the raw amino-acid sequence, 378 residues long: Probable pectin lyase C (378 aa).

The first 18 residues, 1–18, serve as a signal peptide directing secretion; that stretch reads MKVPFLQLLCLNAALASA. Cystine bridges form between C81–C100 and C90–C220. A glycan (N-linked (GlcNAc...) asparagine) is linked at N123. R250 is a catalytic residue. Residues C316 and C324 are joined by a disulfide bond.

The protein belongs to the polysaccharide lyase 1 family.

It localises to the secreted. The enzyme catalyses Eliminative cleavage of (1-&gt;4)-alpha-D-galacturonan methyl ester to give oligosaccharides with 4-deoxy-6-O-methyl-alpha-D-galact-4-enuronosyl groups at their non-reducing ends.. Its function is as follows. Pectinolytic enzymes consist of four classes of enzymes: pectin lyase, polygalacturonase, pectin methylesterase and rhamnogalacturonase. Among pectinolytic enzymes, pectin lyase is the most important in depolymerization of pectin, since it cleaves internal glycosidic bonds of highly methylated pectins. The protein is Probable pectin lyase C (pelC) of Aspergillus niger.